The following is a 317-amino-acid chain: U5 small nuclear ribonucleoprotein TSSC4 (317 aa).

Residues 1–19 (MAETEAGLEADEPTEDDTL) are compositionally biased toward acidic residues. The segment at 1–74 (MAETEAGLEA…PPTGTLTTAV (74 aa)) is disordered. Residues 20–37 (PSDTVSLSDSDSDLSLPS) show a composition bias toward low complexity. A phosphoserine mark is found at serine 57, serine 64, serine 83, and serine 92. A hom2; mediates interaction with the U5 snRNP complexes and required for spliceosomal tri-snRNP complex assembly region spans residues 74 to 101 (VQPFHLRGMSSTFSQRSHSIFDCLESAA). Positions 101–152 (ARQAPCSAPQTSVSDNGSFRRPVTPPSQTPARGLSRVHGNTGPTRVLPVPDY) are disordered. The segment covering 108–117 (APQTSVSDNG) has biased composition (polar residues). Threonine 124 is subject to Phosphothreonine. An interaction with SNRNP200 region spans residues 146–300 (VLPVPDYVSH…SKKRSRDHFR (155 aa)). The interval 147-183 (LPVPDYVSHPERWTKYSLEDVSEASEQSNRDAALAFL) is hom3; mediates interaction with the U5 snRNP complexes. The segment at 198-238 (FNQDPSSCGEGRVVFTKPVRDSEARAERKRVLKKGVGSGAG) is hom4; necessary for interaction with the PRPF19 complex and required for spliceosomal tri-snRNP complex assembly. Residue lysine 214 is modified to N6-acetyllysine. Residues 216 to 317 (VRDSEARAER…GPGSERGPSV (102 aa)) form a disordered region. Residues 240–250 (EAAVELAHLAG) are compositionally biased toward low complexity.

Belongs to the TSSC4 family. In terms of assembly, interacts in a RNA-independent manner with distinct U5 snRNP-containing complexes, the mono-U5 snRNP and the post-splicing U5 snRNP-PRPF19 complex. Interacts with SNRNP200; the interaction is direct, excludes recruitment of C9ORF78 and WBP4 to SNRNP200 and negatively regulates its RNA helicase activity. Interacts with PRPF8; the interaction is direct. Expressed in placenta. Widely expressed in embryo and newborn.

It localises to the nucleus. The protein localises to the cytoplasm. Functionally, protein associated with the U5 snRNP, during its maturation and its post-splicing recycling and which is required for spliceosomal tri-snRNP complex assembly in the nucleus. Has a molecular sequestering activity and transiently hinders SNRNP200 binding sites for constitutive splicing factors that intervene later during the assembly of the spliceosome and splicing. Together with its molecular sequestering activity, may also function as a molecular adapter and placeholder, coordinating the assembly of the U5 snRNP and its association with the U4/U6 di-snRNP. The chain is U5 small nuclear ribonucleoprotein TSSC4 from Mus musculus (Mouse).